We begin with the raw amino-acid sequence, 447 residues long: Phosphoglucosamine mutase (447 aa).

Catalysis depends on Ser-102, which acts as the Phosphoserine intermediate. 4 residues coordinate Mg(2+): Ser-102, Asp-241, Asp-243, and Asp-245. Ser-102 is modified (phosphoserine).

Belongs to the phosphohexose mutase family. Mg(2+) serves as cofactor. Post-translationally, activated by phosphorylation.

It catalyses the reaction alpha-D-glucosamine 1-phosphate = D-glucosamine 6-phosphate. In terms of biological role, catalyzes the conversion of glucosamine-6-phosphate to glucosamine-1-phosphate. The polypeptide is Phosphoglucosamine mutase (Methylococcus capsulatus (strain ATCC 33009 / NCIMB 11132 / Bath)).